Here is a 385-residue protein sequence, read N- to C-terminus: ATP phosphoribosyltransferase regulatory subunit (385 aa).

This sequence belongs to the class-II aminoacyl-tRNA synthetase family. HisZ subfamily. Heteromultimer composed of HisG and HisZ subunits.

It is found in the cytoplasm. The protein operates within amino-acid biosynthesis; L-histidine biosynthesis; L-histidine from 5-phospho-alpha-D-ribose 1-diphosphate: step 1/9. In terms of biological role, required for the first step of histidine biosynthesis. May allow the feedback regulation of ATP phosphoribosyltransferase activity by histidine. The sequence is that of ATP phosphoribosyltransferase regulatory subunit from Bordetella petrii (strain ATCC BAA-461 / DSM 12804 / CCUG 43448).